Consider the following 730-residue polypeptide: Probable G-protein coupled receptor 149 (730 aa).

Residues 1–34 (MSFFLSNLTNDSRLWKVSHNSTDLMNSPETLTLS) are Extracellular-facing. Residues Asn-7, Asn-10, and Asn-20 are each glycosylated (N-linked (GlcNAc...) asparagine). Residues 35–55 (LFCLICLMTLVALVGSIFSLV) form a helical membrane-spanning segment. Residues 56 to 68 (SLLTMQYRTVVSM) are Cytoplasmic-facing. Residues 69–89 (LVTSWSVDDLLSVLSVAIFMV) form a helical membrane-spanning segment. Residues 90-108 (LQWPREAPGYFQSLCTTSA) lie on the Extracellular side of the membrane. The cysteines at positions 104 and 181 are disulfide-linked. The helical transmembrane segment at 109–131 (LLYMCQGLSSNLKATLIVFYNFY) threads the bilayer. Over 132 to 148 (TMHRTVVSQSSSWRSGQ) the chain is Cytoplasmic. A helical transmembrane segment spans residues 149 to 169 (VLGVALTVWAVSLLLASLPLC). Topologically, residues 170–188 (GWGVFVRTPWGCLTDCSSP) are extracellular. A helical membrane pass occupies residues 189 to 209 (YVLLLFAVYASAFGLLAVLSV). At 210–308 (PLTHQLLCSE…SFPVSLAQKR (99 aa)) the chain is on the cytoplasmic side. A helical membrane pass occupies residues 309–329 (FALILALTKVILWLPMMIHMV). Over 330-340 (VKHVVGFQSLP) the chain is Extracellular. Residues 341 to 361 (VDMLSFLLTLLASTVTPVFVL) form a helical membrane-spanning segment. Over 362-730 (SKRWAHLPCG…RKREAESKGN (369 aa)) the chain is Cytoplasmic.

This sequence belongs to the G-protein coupled receptor 1 family. In terms of tissue distribution, expressed exclusively in brain and testis.

Its subcellular location is the cell membrane. In terms of biological role, orphan receptor. This Rattus norvegicus (Rat) protein is Probable G-protein coupled receptor 149 (Gpr149).